Here is a 152-residue protein sequence, read N- to C-terminus: MKISIISFGSSPREWLGLYKKEINKIKQFKYQIEFINLSEHSQENIELKKMLETKDILQKIPKNSSCYLFTERGKTVTSKEFSQLLNFPNICFIIGGSYGVDEKLIAKSRPDIGFLSFGKLTFAHKIFKLIVLEQIYRGFSIKFNRKYHHAD.

S-adenosyl-L-methionine contacts are provided by residues leucine 69, glycine 96, and phenylalanine 118 to phenylalanine 123.

The protein belongs to the RNA methyltransferase RlmH family. Homodimer.

It is found in the cytoplasm. The enzyme catalyses pseudouridine(1915) in 23S rRNA + S-adenosyl-L-methionine = N(3)-methylpseudouridine(1915) in 23S rRNA + S-adenosyl-L-homocysteine + H(+). Functionally, specifically methylates the pseudouridine at position 1915 (m3Psi1915) in 23S rRNA. The polypeptide is Ribosomal RNA large subunit methyltransferase H (Mesomycoplasma hyopneumoniae (strain 7448) (Mycoplasma hyopneumoniae)).